A 340-amino-acid chain; its full sequence is Guanine nucleotide-binding protein G(I)/G(S)/G(T) subunit beta-1 (340 aa).

WD repeat units lie at residues 53 to 83, 95 to 125, 141 to 170, 182 to 212, 224 to 254, 268 to 298, and 310 to 340; these read GHLA…IVWD, LRSS…SIYS, GHTG…ALWD, GHTG…KLWD, GHES…RLFD, NIIC…NVWD, and GHDN…KIWN.

Belongs to the WD repeat G protein beta family. In terms of assembly, g proteins are composed of 3 units, alpha, beta and gamma.

Its function is as follows. Guanine nucleotide-binding proteins (G proteins) are involved as a modulator or transducer in various transmembrane signaling systems. The beta and gamma chains are required for the GTPase activity, for replacement of GDP by GTP, and for G protein-effector interaction. This Homarus americanus (American lobster) protein is Guanine nucleotide-binding protein G(I)/G(S)/G(T) subunit beta-1 (GBETA1).